Reading from the N-terminus, the 602-residue chain is Elongation factor 4 (602 aa).

The tr-type G domain occupies 7-189; the sequence is RNIRNFSIIA…AIVHRIPPPK (183 aa). GTP contacts are provided by residues 19–24 and 136–139; these read DHGKST and NKID.

This sequence belongs to the TRAFAC class translation factor GTPase superfamily. Classic translation factor GTPase family. LepA subfamily.

The protein localises to the cell inner membrane. It catalyses the reaction GTP + H2O = GDP + phosphate + H(+). In terms of biological role, required for accurate and efficient protein synthesis under certain stress conditions. May act as a fidelity factor of the translation reaction, by catalyzing a one-codon backward translocation of tRNAs on improperly translocated ribosomes. Back-translocation proceeds from a post-translocation (POST) complex to a pre-translocation (PRE) complex, thus giving elongation factor G a second chance to translocate the tRNAs correctly. Binds to ribosomes in a GTP-dependent manner. The sequence is that of Elongation factor 4 from Stenotrophomonas maltophilia (strain R551-3).